The primary structure comprises 485 residues: Sodium-coupled neutral amino acid symporter 1 (485 aa).

The Cytoplasmic portion of the chain corresponds to 1-74 (MMHFKSGLEL…EYIPGTTSLG (74 aa)). A Phosphoserine modification is found at serine 6. At threonine 11 the chain carries Phosphothreonine. 4 positions are modified to phosphoserine: serine 25, serine 28, serine 49, and serine 52. Threonine 54 bears the Phosphothreonine mark. Position 56 is a phosphoserine (serine 56). Residues 75 to 97 (MSVFNLSNAIMGSGILGLAFALA) traverse the membrane as a helical segment. Residues 98–112 (NTGILLFLILLTSVT) are Extracellular-facing. The chain crosses the membrane as a helical span at residues 113–133 (LLSIYSINLLLICSKETGCMV). The Cytoplasmic segment spans residues 134 to 148 (YEKLGEQVFGTTGKL). Residues 149–169 (VIFGATSLQNTGAMLSYLFIV) form a helical membrane-spanning segment. Over 170-188 (KNELPSAIKSLMGEEETFS) the chain is Extracellular. A helical membrane pass occupies residues 189 to 211 (AWYVDGRVLVVMVTFGIILPLCL). At 212–216 (LKNLG) the chain is on the cytoplasmic side. The helical transmembrane segment at 217–237 (YLGYTSGFSLSCMVFFLIVVI) threads the bilayer. Residues 238 to 273 (YKKFQIPCMNGEQNSTVSANVTDACTPKYVTFNSKT) are Extracellular-facing. The cysteines at positions 245 and 262 are disulfide-linked. Residues asparagine 251 and asparagine 257 are each glycosylated (N-linked (GlcNAc...) asparagine). Residues 274 to 294 (VYALPTIAFAFVCHPSVLPIY) traverse the membrane as a helical segment. At 295–310 (SELKDRSQKKMQMVSN) the chain is on the cytoplasmic side. A helical transmembrane segment spans residues 311–331 (ISFFAMFVMYFLTAIFGYLTF). Topologically, residues 332–348 (YEKVQSDLLHKYQSTGD) are extracellular. The helical transmembrane segment at 349–369 (ILILTVRLAVIVAVILTVPVL) threads the bilayer. At 370–391 (FFTVRSSLFELAKKTKFHLCRH) the chain is on the cytoplasmic side. The chain crosses the membrane as a helical span at residues 392–412 (VLVTIILLVIINLLVIFIPSM). The Extracellular portion of the chain corresponds to 413–414 (KD). The chain crosses the membrane as a helical span at residues 415–435 (IFGVVGVTSANMLIFILPSSL). Residues 436–450 (YLKITNQDGDKNTQR) are Cytoplasmic-facing. Residues 451–471 (IWAALFLALGVLFSLISIPLV) traverse the membrane as a helical segment. At 472-485 (IYDWACSSSNGEGH) the chain is on the extracellular side.

This sequence belongs to the amino acid/polyamine transporter 2 family. Post-translationally, N-glycosylation plays an important role in the L-glutamine transport. Specifically expressed in brain with the highest levels in cerebellum and thalamus (at protein level). Expressed in glutamatergic, GABAergic and a subset of dopaminergic neurons of the substantia nigra and cholinergic motoneurons (at protein level). Also expressed by ependymal cells lining the ventricle (at protein level). Expression is also detected in spinal cord, heart, colon and placenta.

Its subcellular location is the cell membrane. It carries out the reaction L-glutamine(in) + Na(+)(in) = L-glutamine(out) + Na(+)(out). The catalysed reaction is L-alanine(in) + Na(+)(in) = L-alanine(out) + Na(+)(out). The enzyme catalyses L-asparagine(in) + Na(+)(in) = L-asparagine(out) + Na(+)(out). It catalyses the reaction L-histidine(in) + Na(+)(in) = L-histidine(out) + Na(+)(out). It carries out the reaction L-serine(in) + Na(+)(in) = L-serine(out) + Na(+)(out). The catalysed reaction is L-cysteine(in) + Na(+)(in) = L-cysteine(out) + Na(+)(out). The enzyme catalyses L-methionine(in) + Na(+)(in) = L-methionine(out) + Na(+)(out). It catalyses the reaction glycine(in) + Na(+)(in) = glycine(out) + Na(+)(out). It carries out the reaction L-threonine(in) + Na(+)(in) = L-threonine(out) + Na(+)(out). The catalysed reaction is L-proline(in) + Na(+)(in) = L-proline(out) + Na(+)(out). Its activity is regulated as follows. Inhibited by alpha-(methylamino)isobutyric acid (MeAIB). Inhibited by lithium, potassium, choline ions, N-methylglucamine. The pH dependence has an allosteric effect on the transport. Symporter that cotransports short-chain neutral amino acids and sodium ions from the extraccellular to the intracellular side of the cell membrane. The transport is elctrogenic, pH dependent and driven by the Na(+) electrochemical gradient. Participates in the astroglia-derived glutamine transport into GABAergic interneurons for neurotransmitter GABA de novo synthesis. May also contributes to amino acid transport in placental trophoblast. Regulates synaptic plasticity. The protein is Sodium-coupled neutral amino acid symporter 1 of Rattus norvegicus (Rat).